The primary structure comprises 137 residues: MGLRSCTHFATLVIPLWALAFCFLVVVPVPAQTNLQTSKGDRRLQDLESNMGAESDQPNANLVRPSLSRFGDKRNQKIITFGRRVPRPMIPIELDLLMDNDDENTKAKRFDDYGHMRFGKRGGDDQFDDYGHMRFGR.

Positions 1 to 31 are cleaved as a signal peptide; that stretch reads MGLRSCTHFATLVIPLWALAFCFLVVVPVPA. A propeptide spanning residues 32–74 is cleaved from the precursor; sequence QTNLQTSKGDRRLQDLESNMGAESDQPNANLVRPSLSRFGDKR. A Phenylalanine amide modification is found at Phe81. A propeptide spanning residues 85 to 107 is cleaved from the precursor; the sequence is VPRPMIPIELDLLMDNDDENTKA. Tyr113 carries the sulfotyrosine modification. Phenylalanine amide is present on Phe118. Sulfotyrosine is present on Tyr130. Phenylalanine amide is present on Phe135.

The protein belongs to the gastrin/cholecystokinin family.

It localises to the secreted. In terms of biological role, drosulfakinin-0 (DSK 0) plays diverse biological roles including regulating gut muscle contraction in adults but not in larvae. The chain is Drosulfakinins from Drosophila yakuba (Fruit fly).